Consider the following 308-residue polypeptide: Taste receptor type 2 member 41 (308 aa).

At 1-7 (MLPTLSV) the chain is on the extracellular side. The chain crosses the membrane as a helical span at residues 8–28 (FFMLTFVLLCFLGILANGFIV). Over 29 to 60 (LMLSREWLLRGRLLPSDMILFSLGTSRFFQQC) the chain is Cytoplasmic. A helical membrane pass occupies residues 61-81 (VGLVNSFYYFLHLVEYSGSLA). Over 82–88 (RQLISLH) the chain is Extracellular. The helical transmembrane segment at 89–109 (WDFLNSATFWFCTWLSVLFCI) threads the bilayer. At 110 to 128 (KIANFSHPAFLWLKWRFPA) the chain is on the cytoplasmic side. A helical membrane pass occupies residues 129–149 (LVPWFLLGSILVSVIVTLLFF). At 150 to 186 (WGNHTIYQAFLRRKFTGNTTFKEWNRRLEIDYFMPLK) the chain is on the extracellular side. N-linked (GlcNAc...) asparagine glycans are attached at residues Asn152 and Asn167. The helical transmembrane segment at 187–207 (VVTMSIPCSLFLVSILLLISS) threads the bilayer. The Cytoplasmic portion of the chain corresponds to 208–239 (LRRHSLRMQHNTHSLQDPNVQAHSRALKSLIS). The helical transmembrane segment at 240–260 (FLVLYAVSFVSMIIDATVFIS) threads the bilayer. Residues 261-264 (SDNV) lie on the Extracellular side of the membrane. The chain crosses the membrane as a helical span at residues 265–285 (WYWPWQIILYFCMSVHPFILI). At 286–308 (TNNLRFRGTFRQLLLLARGFWVA) the chain is on the cytoplasmic side.

Belongs to the G-protein coupled receptor T2R family. In terms of tissue distribution, expressed in subsets of taste receptor cells of the tongue and palate epithelium and exclusively in gustducin-positive cells.

The protein localises to the membrane. In terms of biological role, receptor that may play a role in the perception of bitterness and is gustducin-linked. May play a role in sensing the chemical composition of the gastrointestinal content. The activity of this receptor may stimulate alpha gustducin, mediate PLC-beta-2 activation and lead to the gating of TRPM5. In Mus musculus (Mouse), this protein is Taste receptor type 2 member 41 (Tas2r41).